A 98-amino-acid chain; its full sequence is DNA-binding protein Fis (98 aa).

The segment at residues 74 to 93 (QTRAALMMGINRGTLRKKLK) is a DNA-binding region (H-T-H motif).

It belongs to the transcriptional regulatory Fis family. In terms of assembly, homodimer.

Functionally, activates ribosomal RNA transcription. Plays a direct role in upstream activation of rRNA promoters. The chain is DNA-binding protein Fis from Enterobacter sp. (strain 638).